The following is a 388-amino-acid chain: Ferrochelatase (388 aa).

Fe cation contacts are provided by histidine 197 and glutamate 278.

This sequence belongs to the ferrochelatase family.

The protein localises to the cytoplasm. The enzyme catalyses heme b + 2 H(+) = protoporphyrin IX + Fe(2+). It participates in porphyrin-containing compound metabolism; protoheme biosynthesis; protoheme from protoporphyrin-IX: step 1/1. Catalyzes the ferrous insertion into protoporphyrin IX. The sequence is that of Ferrochelatase from Thermosynechococcus vestitus (strain NIES-2133 / IAM M-273 / BP-1).